The chain runs to 904 residues: Anoctamin-5 (904 aa).

The Cytoplasmic portion of the chain corresponds to methionine 1–lysine 290. Residues isoleucine 291–valine 311 traverse the membrane as a helical segment. Topologically, residues glycine 312 to asparagine 371 are extracellular. Asparagine 326, asparagine 357, and asparagine 371 each carry an N-linked (GlcNAc...) asparagine glycan. The chain crosses the membrane as a helical span at residues glutamate 372 to tryptophan 392. Topologically, residues lysine 393–serine 453 are cytoplasmic. A helical membrane pass occupies residues glycine 454 to tyrosine 474. Residues arginine 475–glutamine 502 are Extracellular-facing. The helical transmembrane segment at leucine 503 to phenylalanine 523 threads the bilayer. The Cytoplasmic portion of the chain corresponds to tyrosine 524–threonine 548. Residues leucine 549–phenylalanine 569 form a helical membrane-spanning segment. Topologically, residues lysine 570 to threonine 667 are extracellular. Residues valine 668–alanine 688 form a helical membrane-spanning segment. Residues leucine 689 to aspartate 723 are Cytoplasmic-facing. Residues isoleucine 724–serine 744 traverse the membrane as a helical segment. Topologically, residues aspartate 745 to threonine 825 are extracellular. 3 N-linked (GlcNAc...) asparagine glycosylation sites follow: asparagine 759, asparagine 769, and asparagine 782. A helical membrane pass occupies residues phenylalanine 826–proline 846. The Cytoplasmic segment spans residues aspartate 847–valine 904.

It belongs to the anoctamin family. In terms of tissue distribution, highly expressed in skeletal muscle, bone tissues and thyroid gland.

The protein resides in the endoplasmic reticulum membrane. Its subcellular location is the cell membrane. Plays a role in plasma membrane repair in a process involving annexins. Does not exhibit calcium-activated chloride channel (CaCC) activity. The polypeptide is Anoctamin-5 (Ano5) (Mus musculus (Mouse)).